Consider the following 690-residue polypeptide: Calpain-9 (690 aa).

Positions 1-24 (MPYLHRSLRPQPQPVPRDARTVHS) are disordered. Residues 42 to 337 (LFEDADFPAS…FDKVEICNLT (296 aa)) form the Calpain catalytic domain. Ca(2+) contacts are provided by Leu81, Gly83, and Asp88. Cys97 is an active-site residue. Glu167 is a Ca(2+) binding site. Active-site residues include His254 and Asn278. Residues Glu284, Asp291, Leu312, Asp314, and Glu316 each contribute to the Ca(2+) site. The tract at residues 338–521 (PDALEDNTLH…PQEEETEEER (184 aa)) is domain III. Residues 522–690 (QFRALFRRIA…NEFINLTMNI (169 aa)) are domain IV. 3 consecutive EF-hand domains span residues 534–552 (DMEV…VLQK), 561–589 (LSLL…FRVF), and 591–626 (DKLR…AGFQ). Residues Asp574, Ser576, Asn578, Lys580, Glu585, Asp604, Asp606, Ser608, Thr610, and Glu615 each coordinate Ca(2+).

Belongs to the peptidase C2 family. As to expression, predominantly expressed in stomach and small intestine, although low levels of expression in other organs.

Functionally, calcium-regulated non-lysosomal thiol-protease. This chain is Calpain-9 (Capn9), found in Rattus norvegicus (Rat).